A 214-amino-acid chain; its full sequence is Glutathione S-transferase 1 (214 aa).

A GST N-terminal domain is found at 2–83 (APMKLYGAVM…YAARKNKPEL (82 aa)). Glutathione-binding positions include serine 12, 41–42 (HK), 54–55 (QV), and 67–68 (ES). Residues 88-214 (NLEEAAMVDV…KVAALMKPSA (127 aa)) form the GST C-terminal domain.

The protein belongs to the GST superfamily. Phi family. In terms of assembly, homodimer or heterodimer of GST-I and GST-IV (=GST-II). Expressed in the stem and leaves, lower levels are seen in the pollen and endosperm.

The catalysed reaction is RX + glutathione = an S-substituted glutathione + a halide anion + H(+). In terms of biological role, conjugation of reduced glutathione to a wide number of exogenous and endogenous hydrophobic electrophiles. Involved in the detoxification of certain herbicides. In Zea mays (Maize), this protein is Glutathione S-transferase 1 (GST1).